Consider the following 529-residue polypeptide: Na(+)/H(+) antiporter NhaB (529 aa).

12 consecutive transmembrane segments (helical) span residues phenylalanine 13–proline 33, isoleucine 34–phenylalanine 54, leucine 90–methionine 110, leucine 113–leucine 133, leucine 149–tyrosine 166, leucine 205–proline 225, phenylalanine 241–phenylalanine 261, glycine 306–isoleucine 326, glycine 327–glycine 347, glutamate 351–isoleucine 371, alanine 451–isoleucine 471, and valine 479–phenylalanine 499.

This sequence belongs to the NhaB Na(+)/H(+) (TC 2.A.34) antiporter family.

It is found in the cell inner membrane. The catalysed reaction is 2 Na(+)(in) + 3 H(+)(out) = 2 Na(+)(out) + 3 H(+)(in). In terms of biological role, na(+)/H(+) antiporter that extrudes sodium in exchange for external protons. In Vibrio vulnificus (strain YJ016), this protein is Na(+)/H(+) antiporter NhaB.